A 256-amino-acid polypeptide reads, in one-letter code: Protein US2 homolog (256 aa).

Disordered regions lie at residues 100 to 120 (TRRP…SPPP), 167 to 186 (STAA…RRRP), and 236 to 256 (VRRR…CTIS). Residues 167–180 (STAAGAPGAPTGAR) are compositionally biased toward low complexity. The span at 245-256 (NGRERAPRCTIS) shows a compositional bias: basic and acidic residues.

This sequence belongs to the herpesviridae US2 family.

This is Protein US2 homolog (28K) from Sus scrofa (Pig).